The sequence spans 188 residues: MTEVVPRTVLYCGVCTLPPEYCEFGGAFKRCKAWLEDNDQELFAQLYSVEALTNAVQASSISAEKQEEIDRKLQKQQQKDEAKAERELLKKLASKVVIKRIERSKRKRIISVSGLEVFELDLKKLSKTFSSKFATGASVTKTADGKEEIVIQGDVGDGVEELITQMLKEKGLNQVKVEQIDEKKKKKE.

An SUI1 domain is found at 96-167 (VVIKRIERSK…GVEELITQML (72 aa)).

It belongs to the DENR family. In terms of assembly, interacts with the 40S ribosomal subunit.

It is found in the cytoplasm. The protein is Translation machinery-associated protein 22 (TMA22) of Yarrowia lipolytica (strain CLIB 122 / E 150) (Yeast).